Consider the following 197-residue polypeptide: MSDRIAQVTRNTLETKISVSLNLDGAGKGVFNTGVPFLEHMMDQIARHGMIDLDVTCDGDTHIDDHHSVEDIGITIGQAIAKAVGDKKGIRRYGHAYVPLDEALSRVVIDFSGRPGLVMDIPFTQKRIGQFDTELFWEFFQGFVNHAGVTLHVDNLRGHNAHHQIETVFKAFGRALRMALEKDPRMEGIMPSTKGSL.

It belongs to the imidazoleglycerol-phosphate dehydratase family.

It localises to the cytoplasm. The catalysed reaction is D-erythro-1-(imidazol-4-yl)glycerol 3-phosphate = 3-(imidazol-4-yl)-2-oxopropyl phosphate + H2O. It functions in the pathway amino-acid biosynthesis; L-histidine biosynthesis; L-histidine from 5-phospho-alpha-D-ribose 1-diphosphate: step 6/9. The polypeptide is Imidazoleglycerol-phosphate dehydratase (Cellvibrio japonicus (strain Ueda107) (Pseudomonas fluorescens subsp. cellulosa)).